The following is a 117-amino-acid chain: Large ribosomal subunit protein bL19 (117 aa).

Belongs to the bacterial ribosomal protein bL19 family.

This protein is located at the 30S-50S ribosomal subunit interface and may play a role in the structure and function of the aminoacyl-tRNA binding site. The sequence is that of Large ribosomal subunit protein bL19 from Alkaliphilus metalliredigens (strain QYMF).